The primary structure comprises 1544 residues: Protein mahjong (1544 aa).

The tract at residues 1 to 110 (MSEGSGSENA…AAADRRQATK (110 aa)) is disordered. The segment covering 10–35 (AAAAEAAAEAEAATEAALMAEAVAVA) has biased composition (low complexity). Residues 38 to 91 (SDEEEQPEAEDMPEQAGDNQEEDAAEQQDGGEPEADEDADADDAMSVENAENES) are compositionally biased toward acidic residues. Phosphoserine is present on residues S565 and S569. The 33-residue stretch at 912-944 (NKQQLYQLIFEHLESNGLSQTAQMLQREVGLPL) folds into the LisH domain. Disordered regions lie at residues 946–973 (TPTT…SRNR) and 987–1059 (GNGD…LAED). Position 955 is a phosphoserine (S955). Positions 961-971 (SLPSGSSSLSR) are enriched in low complexity. A compositionally biased stretch (polar residues) spans 1016-1027 (PNFSSLNTTQTP). Short sequence motifs (DWD box) lie at residues 1302–1309 (VLWDVRSG) and 1338–1345 (EVWDLRTF). Disordered regions lie at residues 1447–1475 (KSER…ENTF) and 1487–1544 (LRNL…SSDD). Acidic residues-rich tracts occupy residues 1451–1467 (SEEE…EDGS) and 1495–1535 (NDDE…DVLE).

This sequence belongs to the VPRBP/DCAF1 family. In terms of assembly, component of the CUL4-RBX1-DDB1-DCAF1 E3 ubiquitin-protein ligase complex. Interacts with l(2)gl.

It localises to the nucleus. Its pathway is protein modification; protein ubiquitination. Its function is as follows. Probable substrate recognition component of tsome E3 ubiquitin-protein ligase complex. Plays a key role in cell competition via its interaction with l(2)gl. This Drosophila melanogaster (Fruit fly) protein is Protein mahjong (mahj).